The following is a 466-amino-acid chain: Chromosomal replication initiator protein DnaA (466 aa).

Positions 1–85 (MSLSLWQHCL…FEVGNKPVSA (85 aa)) are domain I, interacts with DnaA modulators. The segment at 82 to 122 (PVSARTTESVPKTVTHPAVNSTPTNSQPVRPSWDNQPQSQL) is disordered. The segment covering 85-122 (ARTTESVPKTVTHPAVNSTPTNSQPVRPSWDNQPQSQL) has biased composition (polar residues). A domain II region spans residues 85 to 129 (ARTTESVPKTVTHPAVNSTPTNSQPVRPSWDNQPQSQLPELNYRS). Positions 130–346 (NVNPKHKFDN…GALNRVIANA (217 aa)) are domain III, AAA+ region. Residues G174, G176, K177, and T178 each contribute to the ATP site. The domain IV, binds dsDNA stretch occupies residues 347–466 (NFTGRAITID…FSNLIRTLSS (120 aa)).

Belongs to the DnaA family. As to quaternary structure, oligomerizes as a right-handed, spiral filament on DNA at oriC.

The protein localises to the cytoplasm. Functionally, plays an essential role in the initiation and regulation of chromosomal replication. ATP-DnaA binds to the origin of replication (oriC) to initiate formation of the DNA replication initiation complex once per cell cycle. Binds the DnaA box (a 9 base pair repeat at the origin) and separates the double-stranded (ds)DNA. Forms a right-handed helical filament on oriC DNA; dsDNA binds to the exterior of the filament while single-stranded (ss)DNA is stabiized in the filament's interior. The ATP-DnaA-oriC complex binds and stabilizes one strand of the AT-rich DNA unwinding element (DUE), permitting loading of DNA polymerase. After initiation quickly degrades to an ADP-DnaA complex that is not apt for DNA replication. Binds acidic phospholipids. The polypeptide is Chromosomal replication initiator protein DnaA (Proteus mirabilis (strain HI4320)).